A 1545-amino-acid chain; its full sequence is Dual oxidase 2 (1545 aa).

The first 25 residues, 1 to 25, serve as a signal peptide directing secretion; the sequence is MLCIRPEALVLLGALLTVPLDPVGG. Topologically, residues 26-601 are extracellular; the sequence is QDALSLTWEV…EGSGPGFGIT (576 aa). The peroxidase-like; mediates peroxidase activity stretch occupies residues 30-596; it reads SLTWEVQRYD…VIQYFEGSGP (567 aa). N-linked (GlcNAc...) asparagine glycosylation is found at asparagine 100, asparagine 312, asparagine 348, asparagine 358, asparagine 455, and asparagine 549. Cysteine 124 and cysteine 1159 form a disulfide bridge. The chain crosses the membrane as a helical span at residues 602-622; that stretch reads IVALCCLPLMSLLISGVVAYF. Residues 623–1037 are Cytoplasmic-facing; that stretch reads RSRERKKLQK…YKRFVENYRR (415 aa). EF-hand domains follow at residues 819–854, 855–890, and 899–934; these read PQDMFVESMFSLADKDGNGYLSFREFLDVLVVFMKG, SPEDKSRLMFTMYDLDGNGFLSKDEFFTMIRSFIEI, and QLTEVVESMFREAGFQDKQELTWEDFHFMLRDHDSE. Ca(2+)-binding residues include aspartate 832, aspartate 834, asparagine 836, tyrosine 838, glutamate 843, aspartate 868, aspartate 870, asparagine 872, and glutamate 879. Positions 960–1242 are interaction with TXNDC11; sequence RVSFIIRTPE…GSFALIQLPR (283 aa). A helical transmembrane segment spans residues 1038 to 1058; that stretch reads HIVCVAIFSAICAGLFVERAY. Residues 1059 to 1074 lie on the Extracellular side of the membrane; the sequence is YYAFVSPPSGIAETTF. The chain crosses the membrane as a helical span at residues 1075–1097; the sequence is VGIILSRGTAASVSFMFSYILLT. A Ferric oxidoreductase domain is found at 1081 to 1263; sequence RGTAASVSFM…YVGDKLVSLS (183 aa). The Cytoplasmic segment spans residues 1098-1125; it reads MCRNLITFLRETFLNHYVPFDAAVDFHR. The chain crosses the membrane as a helical span at residues 1126–1148; sequence WIAMAALVLAILHSVGHVVNVYI. The Extracellular portion of the chain corresponds to 1149–1182; the sequence is FSVSPLSLLACVFPSVFVNDGSKLPQKFYWWFFQ. A helical membrane pass occupies residues 1183 to 1203; it reads TIPGMTGVLLLVVLAIMYVFA. The Cytoplasmic segment spans residues 1204–1220; that stretch reads SPYFRRRSFRGFWLTHH. The chain crosses the membrane as a helical span at residues 1221–1241; the sequence is FYILLYVLLIIHGSFALIQLP. A topological domain (extracellular) is located at residue arginine 1242. A helical membrane pass occupies residues 1243 to 1263; sequence FHIFFLVPALIYVGDKLVSLS. One can recognise an FAD-binding FR-type domain in the interval 1264-1370; it reads RKKVEISVVK…DGPFGEGHQE (107 aa). Residues 1264-1545 lie on the Cytoplasmic side of the membrane; that stretch reads RKKVEISVVK…THFVHHYENF (282 aa).

The protein in the N-terminal section; belongs to the peroxidase family. As to quaternary structure, heterodimer with DUOXA2; disulfide-linked. Interacts with TXNDC11, TPO and CYBA. Post-translationally, N-glycosylated. As to expression, expressed in thyroid, and the digestive tract especially in stomach, cecum and sigmoidal colon (at protein level). Expressed in thyroid.

The protein localises to the apical cell membrane. The protein resides in the cell junction. The enzyme catalyses NADH + O2 + H(+) = H2O2 + NAD(+). It carries out the reaction NADPH + O2 + H(+) = H2O2 + NADP(+). Its pathway is hormone biosynthesis; thyroid hormone biosynthesis. Its activity is regulated as follows. The NADPH oxidase activity is calcium-dependent. Peroxidase activity is inhibited by aminobenzohydrazide. Functionally, generates hydrogen peroxide which is required for the activity of thyroid peroxidase/TPO and lactoperoxidase/LPO. Plays a role in thyroid hormones synthesis and lactoperoxidase-mediated antimicrobial defense at the surface of mucosa. May have its own peroxidase activity through its N-terminal peroxidase-like domain. In Sus scrofa (Pig), this protein is Dual oxidase 2 (DUOX2).